Reading from the N-terminus, the 417-residue chain is NADH-quinone oxidoreductase subunit D (417 aa).

The protein belongs to the complex I 49 kDa subunit family. In terms of assembly, NDH-1 is composed of 14 different subunits. Subunits NuoB, C, D, E, F, and G constitute the peripheral sector of the complex.

The protein resides in the cell inner membrane. It carries out the reaction a quinone + NADH + 5 H(+)(in) = a quinol + NAD(+) + 4 H(+)(out). Its function is as follows. NDH-1 shuttles electrons from NADH, via FMN and iron-sulfur (Fe-S) centers, to quinones in the respiratory chain. The immediate electron acceptor for the enzyme in this species is believed to be ubiquinone. Couples the redox reaction to proton translocation (for every two electrons transferred, four hydrogen ions are translocated across the cytoplasmic membrane), and thus conserves the redox energy in a proton gradient. The polypeptide is NADH-quinone oxidoreductase subunit D (Burkholderia cenocepacia (strain HI2424)).